Consider the following 358-residue polypeptide: Naringenin,2-oxoglutarate 3-dioxygenase (358 aa).

Residues Cys-190 to Pro-294 enclose the Fe2OG dioxygenase domain. Fe cation contacts are provided by His-217, Asp-219, and His-275. Arg-285 contributes to the 2-oxoglutarate binding site.

The protein belongs to the iron/ascorbate-dependent oxidoreductase family. As to quaternary structure, interacts with Dihydroflavonol-4-reductase (TT3), chalcone synthase (TT4) and chalcone isomerase (TT5) to form a flavonoid enzyme complex. Fe(2+) is required as a cofactor. L-ascorbate serves as cofactor.

The catalysed reaction is a (2S)-flavan-4-one + 2-oxoglutarate + O2 = a (2R,3R)-dihydroflavonol + succinate + CO2. It participates in secondary metabolite biosynthesis; flavonoid biosynthesis. Catalyzes the 3-beta-hydroxylation of 2S-flavanones to 2R,3R-dihydroflavonols which are intermediates in the biosynthesis of flavonols, anthocyanidins, catechins and proanthocyanidins in plants. The protein is Naringenin,2-oxoglutarate 3-dioxygenase (F3H) of Arabidopsis thaliana (Mouse-ear cress).